The primary structure comprises 214 residues: Urease accessory protein UreE (214 aa).

Residues 163 to 214 (NAEPSGVDHSHEATDSGHGYGEDHDHDHSHDHNHDHDHNHDHDHSHSHDSHE) form a disordered region. Basic and acidic residues predominate over residues 168–214 (GVDHSHEATDSGHGYGEDHDHDHSHDHNHDHDHNHDHDHSHSHDSHE).

The protein belongs to the UreE family.

Its subcellular location is the cytoplasm. In terms of biological role, involved in urease metallocenter assembly. Binds nickel. Probably functions as a nickel donor during metallocenter assembly. This Natronomonas pharaonis (strain ATCC 35678 / DSM 2160 / CIP 103997 / JCM 8858 / NBRC 14720 / NCIMB 2260 / Gabara) (Halobacterium pharaonis) protein is Urease accessory protein UreE.